The chain runs to 1070 residues: TSC22 domain family protein 1 (1070 aa).

Residues 1-98 (MHQPPESTAA…SQAQLQAQPL (98 aa)) are required for interaction with TGFBR1 and promotion of TGF-beta signaling. Disordered regions lie at residues 1-110 (MHQP…KKSG), 125-289 (ISSN…PASV), 458-487 (VTSE…VGSG), 604-637 (YSQA…STQM), and 830-858 (TSQV…AQTP). Residues 36–45 (GSASALNAAG) show a composition bias toward low complexity. The span at 58–70 (FPPPSLLQPPPPA) shows a compositional bias: pro residues. The span at 84–100 (SLNLLSQAQLQAQPLAP) shows a compositional bias: low complexity. Residues 133 to 142 (EDTESYDDLD) are compositionally biased toward acidic residues. Residues 216–240 (HPHHLHHHHHIHHGHHLQHGHHHPS) show a composition bias toward basic residues. Over residues 241-250 (HVAVASASIP) the composition is skewed to low complexity. Residues 261 to 271 (KLSTTGSSDSI) are compositionally biased toward polar residues. Phosphoserine is present on Ser-263. 2 stretches are compositionally biased toward low complexity: residues 272-289 (TPVA…PASV) and 465-478 (TSGS…STRS). A compositionally biased stretch (pro residues) spans 611-622 (VQTPLPGAPPPQ). Low complexity predominate over residues 830–845 (TSQVSSAGPSGMPSAP). Residues 849-858 (VPPQNIAQTP) are compositionally biased toward polar residues. The interval 1003-1024 (LKEQIKELIEKNSQLEQENNLL) is leucine-zipper. A disordered region spans residues 1034–1070 (AQFQAQLQTGSPPATTQPQGTTQPPAQPASQGSGPTA). Positions 1041–1070 (QTGSPPATTQPQGTTQPPAQPASQGSGPTA) are enriched in low complexity.

Belongs to the TSC-22/Dip/Bun family. As to quaternary structure, forms homodimers. Forms heterodimers. Component of a complex composed of TSC22D1 (via N-terminus), TGFBR1 and TGFBR2; the interaction between TSC22D1 and TGFBR1 is inhibited by SMAD7 and promoted by TGFB1. Interacts with SMAD7; the interaction requires TGF-beta and the interaction is inhibited by TGFBR1. Interacts with TPT1/fortilin; interaction results in the destabilization of TSC22D1 protein and prevents TSC22D1-mediated apoptosis. Interacts with SMAD4 (via N-terminus). Interacts with ACVRL1/ALK1, ACVR1/ALK2, BMPR1A/ALK3, ACVR1B/ALK4, BMPR1B/ALK6, ACVR2A/ACTRII, and BMPR2. Interacts with SMAD6. Interacts with TFE3; the interaction is enhanced in the presence of TGF-beta. In terms of assembly, forms a heterodimer with TSC22D4/THG1. Forms a heterodimer with TSC22D4/THG1. Interacts with histone H1-2. Interacts with GNL3.

The protein resides in the cytoplasm. It is found in the nucleus. It localises to the cell membrane. Its subcellular location is the mitochondrion. Transcriptional repressor. Acts on the C-type natriuretic peptide (CNP) promoter. Acts to promote CASP3-mediated apoptosis. Positively regulates TGF-beta signaling by interacting with SMAD7 which inhibits binding of SMAD7 to TGFBR1, preventing recruitment of SMURF ubiquitin ligases to TGFBR1 and inhibiting SMURF-mediated ubiquitination and degradation of TGFBR1. Contributes to enhancement of TGF-beta signaling by binding to and modulating the transcription activator activity of SMAD4. Promotes TGF-beta-induced transcription of COL1A2; via its interaction with TFE3 at E-boxes in the gene proximal promoter. Plays a role in the repression of hematopoietic precursor cell growth. Promotes IL2 deprivation-induced apoptosis in T-lymphocytes, via repression of TSC22D3/GILZ transcription and activation of the caspase cascade. Its function is as follows. May act to negatively regulate TGFB3 signaling and thereby inhibit cell death in mammary gland cells. Functionally, positively regulates cell death in response to TGFB3 during mammary gland involution. The sequence is that of TSC22 domain family protein 1 from Pongo abelii (Sumatran orangutan).